Consider the following 185-residue polypeptide: Ribosome-recycling factor (185 aa).

The protein belongs to the RRF family.

It localises to the cytoplasm. Functionally, responsible for the release of ribosomes from messenger RNA at the termination of protein biosynthesis. May increase the efficiency of translation by recycling ribosomes from one round of translation to another. This chain is Ribosome-recycling factor, found in Nitrosospira multiformis (strain ATCC 25196 / NCIMB 11849 / C 71).